A 559-amino-acid chain; its full sequence is Small ribosomal subunit protein bS1 (559 aa).

S1 motif domains follow at residues 21 to 87 (GAII…LSRE), 105 to 171 (DEVV…VSRR), 192 to 260 (GQQV…LGLK), 277 to 347 (GTRV…LGIK), 364 to 434 (GDRI…LGIK), and 451 to 520 (GSIV…LSVK).

This sequence belongs to the bacterial ribosomal protein bS1 family.

Functionally, binds mRNA; thus facilitating recognition of the initiation point. It is needed to translate mRNA with a short Shine-Dalgarno (SD) purine-rich sequence. The chain is Small ribosomal subunit protein bS1 (rpsA) from Pseudomonas aeruginosa (strain ATCC 15692 / DSM 22644 / CIP 104116 / JCM 14847 / LMG 12228 / 1C / PRS 101 / PAO1).